An 825-amino-acid polypeptide reads, in one-letter code: Probable inorganic carbon transporter subunit DabA (825 aa).

Zn(2+) contacts are provided by Cys-334, Asp-336, His-521, and Cys-536.

This sequence belongs to the inorganic carbon transporter (TC 9.A.2) DabA family. Forms a complex with DabB. Zn(2+) is required as a cofactor.

The protein resides in the cell inner membrane. In terms of biological role, part of an energy-coupled inorganic carbon pump. The polypeptide is Probable inorganic carbon transporter subunit DabA (Acidithiobacillus ferrooxidans (strain ATCC 23270 / DSM 14882 / CIP 104768 / NCIMB 8455) (Ferrobacillus ferrooxidans (strain ATCC 23270))).